The following is a 134-amino-acid chain: Small ribosomal subunit protein uS8c (134 aa).

This sequence belongs to the universal ribosomal protein uS8 family. As to quaternary structure, part of the 30S ribosomal subunit.

It is found in the plastid. It localises to the chloroplast. Functionally, one of the primary rRNA binding proteins, it binds directly to 16S rRNA central domain where it helps coordinate assembly of the platform of the 30S subunit. This chain is Small ribosomal subunit protein uS8c (rps8), found in Populus alba (White poplar).